The sequence spans 225 residues: Octanoyltransferase (225 aa).

The BPL/LPL catalytic domain maps to 31–214 (ENTCDEVWLV…ELTTLLDYTD (184 aa)). Substrate contacts are provided by residues 70–77 (RGGQVTYH), 137–139 (SLG), and 150–152 (GLA). Catalysis depends on cysteine 168, which acts as the Acyl-thioester intermediate.

Belongs to the LipB family.

The protein resides in the cytoplasm. It carries out the reaction octanoyl-[ACP] + L-lysyl-[protein] = N(6)-octanoyl-L-lysyl-[protein] + holo-[ACP] + H(+). It participates in protein modification; protein lipoylation via endogenous pathway; protein N(6)-(lipoyl)lysine from octanoyl-[acyl-carrier-protein]: step 1/2. Its function is as follows. Catalyzes the transfer of endogenously produced octanoic acid from octanoyl-acyl-carrier-protein onto the lipoyl domains of lipoate-dependent enzymes. Lipoyl-ACP can also act as a substrate although octanoyl-ACP is likely to be the physiological substrate. This Aliivibrio fischeri (strain ATCC 700601 / ES114) (Vibrio fischeri) protein is Octanoyltransferase.